Here is a 547-residue protein sequence, read N- to C-terminus: Glucose-6-phosphate isomerase (547 aa).

The Proton donor role is filled by E350. Residues H381 and K510 contribute to the active site.

It belongs to the GPI family.

The protein resides in the cytoplasm. The enzyme catalyses alpha-D-glucose 6-phosphate = beta-D-fructose 6-phosphate. The protein operates within carbohydrate biosynthesis; gluconeogenesis. It participates in carbohydrate degradation; glycolysis; D-glyceraldehyde 3-phosphate and glycerone phosphate from D-glucose: step 2/4. Functionally, catalyzes the reversible isomerization of glucose-6-phosphate to fructose-6-phosphate. The sequence is that of Glucose-6-phosphate isomerase from Mesorhizobium japonicum (strain LMG 29417 / CECT 9101 / MAFF 303099) (Mesorhizobium loti (strain MAFF 303099)).